Reading from the N-terminus, the 102-residue chain is Large ribosomal subunit protein bL21 (102 aa).

Belongs to the bacterial ribosomal protein bL21 family. Part of the 50S ribosomal subunit. Contacts protein L20.

This protein binds to 23S rRNA in the presence of protein L20. This Pseudarthrobacter chlorophenolicus (strain ATCC 700700 / DSM 12829 / CIP 107037 / JCM 12360 / KCTC 9906 / NCIMB 13794 / A6) (Arthrobacter chlorophenolicus) protein is Large ribosomal subunit protein bL21.